The sequence spans 70 residues: Conotoxin Cl6.13 (70 aa).

Residues 1 to 21 form the signal peptide; sequence MKFPLLFISLALAAFLTRVQD. Positions 22–33 are excised as a propeptide; the sequence is ADSSVISKEKSV. Cystine bridges form between C41-C58, C48-C63, and C57-C68.

In terms of tissue distribution, expressed by the venom duct.

The protein resides in the secreted. The protein is Conotoxin Cl6.13 of Californiconus californicus (California cone).